The following is a 274-amino-acid chain: NAD-dependent protein deacetylase (274 aa).

Residues 1–274 (MDSRMSDLQA…CDEVLAEVVS (274 aa)) enclose the Deacetylase sirtuin-type domain. NAD(+) is bound by residues 26 to 46 (GAGC…GQWK) and 104 to 107 (QNVD). The Proton acceptor role is filled by His-122. The Zn(2+) site is built by Cys-130, Cys-133, Cys-181, and Cys-184. NAD(+) is bound by residues 221–223 (GSS), 247–249 (NLG), and Cys-265.

This sequence belongs to the sirtuin family. Class II subfamily. It depends on Zn(2+) as a cofactor.

It is found in the cytoplasm. The catalysed reaction is N(6)-acetyl-L-lysyl-[protein] + NAD(+) + H2O = 2''-O-acetyl-ADP-D-ribose + nicotinamide + L-lysyl-[protein]. NAD-dependent protein deacetylase which modulates the activities of several enzymes which are inactive in their acetylated form. The polypeptide is NAD-dependent protein deacetylase (Bordetella bronchiseptica (strain ATCC BAA-588 / NCTC 13252 / RB50) (Alcaligenes bronchisepticus)).